The chain runs to 424 residues: MLDIKLFREEPNKIFDSEKKRFRDTINVEKVIEYDNLWREGLQNLNNLRSEKNKLSKSFKQAKKDGNLEEVISKSKKVASDIKELEPKIEEYERIRDEYRYKVGNIIDENVPVSDTEDDNEVIRTNGDFPSFDFEPLNHVDLINLIDGADTDTASQIAGSRFYYLKQDILFLNLALIQFALNELKDKGYTPLQTPFFIKSEVAEETSELGEFEETLYKVENEDLYLIATAEQTLAALHRNEIIDSEDLPLRYCALSTCFRKEAGSHGKDTLGIFRVHQFEKVEQFIYATPENSTLEHEKLLEVTEGIYQKLGLPYQIVAIVSSALNDNAAIKYDLEAWFPGSGTYRELVSCTNCKDYQARKINTRYGKAGAGDAQILHTLNSTAIATERTICCILENYQQEDGSIKIPDVLIPYMNGKTIIEAK.

Residue 229-231 participates in L-serine binding; sequence TAE. ATP contacts are provided by residues 260–262 and Val-276; that span reads RKE. Residue Glu-283 coordinates L-serine. Position 347–350 (347–350) interacts with ATP; the sequence is ELVS. Thr-383 provides a ligand contact to L-serine.

Belongs to the class-II aminoacyl-tRNA synthetase family. Type-1 seryl-tRNA synthetase subfamily. In terms of assembly, homodimer. The tRNA molecule binds across the dimer.

The protein localises to the cytoplasm. It catalyses the reaction tRNA(Ser) + L-serine + ATP = L-seryl-tRNA(Ser) + AMP + diphosphate + H(+). It carries out the reaction tRNA(Sec) + L-serine + ATP = L-seryl-tRNA(Sec) + AMP + diphosphate + H(+). The protein operates within aminoacyl-tRNA biosynthesis; selenocysteinyl-tRNA(Sec) biosynthesis; L-seryl-tRNA(Sec) from L-serine and tRNA(Sec): step 1/1. Functionally, catalyzes the attachment of serine to tRNA(Ser). Is also able to aminoacylate tRNA(Sec) with serine, to form the misacylated tRNA L-seryl-tRNA(Sec), which will be further converted into selenocysteinyl-tRNA(Sec). The chain is Serine--tRNA ligase from Methanosphaera stadtmanae (strain ATCC 43021 / DSM 3091 / JCM 11832 / MCB-3).